The primary structure comprises 475 residues: Ribulose bisphosphate carboxylase large chain (475 aa).

Residues 1–2 constitute a propeptide that is removed on maturation; sequence MA. N-acetylproline is present on Pro3. The residue at position 14 (Lys14) is an N6,N6,N6-trimethyllysine. Substrate-binding residues include Asn123 and Thr173. Lys175 serves as the catalytic Proton acceptor. Lys177 contributes to the substrate binding site. Mg(2+) contacts are provided by Lys201, Asp203, and Glu204. Position 201 is an N6-carboxylysine (Lys201). His294 functions as the Proton acceptor in the catalytic mechanism. The substrate site is built by Arg295, His327, and Ser379.

This sequence belongs to the RuBisCO large chain family. Type I subfamily. As to quaternary structure, heterohexadecamer of 8 large chains and 8 small chains. Mg(2+) is required as a cofactor.

The protein localises to the plastid. It is found in the chloroplast. It carries out the reaction 2 (2R)-3-phosphoglycerate + 2 H(+) = D-ribulose 1,5-bisphosphate + CO2 + H2O. The catalysed reaction is D-ribulose 1,5-bisphosphate + O2 = 2-phosphoglycolate + (2R)-3-phosphoglycerate + 2 H(+). Its function is as follows. RuBisCO catalyzes two reactions: the carboxylation of D-ribulose 1,5-bisphosphate, the primary event in carbon dioxide fixation, as well as the oxidative fragmentation of the pentose substrate in the photorespiration process. Both reactions occur simultaneously and in competition at the same active site. The chain is Ribulose bisphosphate carboxylase large chain from Nephroselmis olivacea (Green alga).